A 21-amino-acid chain; its full sequence is Granule-bound starch synthase 1 (21 aa).

This sequence belongs to the glycosyltransferase 1 family. Bacterial/plant glycogen synthase subfamily.

The protein localises to the plastid. It is found in the chloroplast. Its subcellular location is the amyloplast. It carries out the reaction an NDP-alpha-D-glucose + [(1-&gt;4)-alpha-D-glucosyl](n) = [(1-&gt;4)-alpha-D-glucosyl](n+1) + a ribonucleoside 5'-diphosphate + H(+). It participates in glycan biosynthesis; starch biosynthesis. The chain is Granule-bound starch synthase 1 from Secale cereale (Rye).